The primary structure comprises 259 residues: Cytochrome c oxidase subunit 3 (259 aa).

Transmembrane regions (helical) follow at residues 13–33, 36–56, 80–100, 125–145, 160–180, 195–215, and 237–257; these read PWPL…ASWF, HGFL…IQWW, GMIL…WAFF, FSVP…VTWA, ALIL…GEYM, FFVA…FLAI, and AWYW…IYWW.

The protein belongs to the cytochrome c oxidase subunit 3 family. In terms of assembly, component of the cytochrome c oxidase (complex IV, CIV), a multisubunit enzyme composed of a catalytic core of 3 subunits and several supernumerary subunits. The complex exists as a monomer or a dimer and forms supercomplexes (SCs) in the inner mitochondrial membrane with ubiquinol-cytochrome c oxidoreductase (cytochrome b-c1 complex, complex III, CIII).

The protein localises to the mitochondrion inner membrane. The catalysed reaction is 4 Fe(II)-[cytochrome c] + O2 + 8 H(+)(in) = 4 Fe(III)-[cytochrome c] + 2 H2O + 4 H(+)(out). In terms of biological role, component of the cytochrome c oxidase, the last enzyme in the mitochondrial electron transport chain which drives oxidative phosphorylation. The respiratory chain contains 3 multisubunit complexes succinate dehydrogenase (complex II, CII), ubiquinol-cytochrome c oxidoreductase (cytochrome b-c1 complex, complex III, CIII) and cytochrome c oxidase (complex IV, CIV), that cooperate to transfer electrons derived from NADH and succinate to molecular oxygen, creating an electrochemical gradient over the inner membrane that drives transmembrane transport and the ATP synthase. Cytochrome c oxidase is the component of the respiratory chain that catalyzes the reduction of oxygen to water. Electrons originating from reduced cytochrome c in the intermembrane space (IMS) are transferred via the dinuclear copper A center (CU(A)) of subunit 2 and heme A of subunit 1 to the active site in subunit 1, a binuclear center (BNC) formed by heme A3 and copper B (CU(B)). The BNC reduces molecular oxygen to 2 water molecules using 4 electrons from cytochrome c in the IMS and 4 protons from the mitochondrial matrix. This chain is Cytochrome c oxidase subunit 3 (COIII), found in Lumbricus terrestris (Common earthworm).